The primary structure comprises 473 residues: Glutamyl-tRNA reductase (473 aa).

Substrate is bound by residues 49-52 (TCNR), Ser109, 114-116 (ESQ), and Gln120. Cys50 acts as the Nucleophile in catalysis. The tract at residues 196–215 (LDGGGVAAEGPRHAVTPEPP) is disordered. 226-231 (GAGAVG) is a binding site for NADP(+).

Belongs to the glutamyl-tRNA reductase family. As to quaternary structure, homodimer.

The catalysed reaction is (S)-4-amino-5-oxopentanoate + tRNA(Glu) + NADP(+) = L-glutamyl-tRNA(Glu) + NADPH + H(+). Its pathway is porphyrin-containing compound metabolism; protoporphyrin-IX biosynthesis; 5-aminolevulinate from L-glutamyl-tRNA(Glu): step 1/2. In terms of biological role, catalyzes the NADPH-dependent reduction of glutamyl-tRNA(Glu) to glutamate 1-semialdehyde (GSA). This Frankia casuarinae (strain DSM 45818 / CECT 9043 / HFP020203 / CcI3) protein is Glutamyl-tRNA reductase.